We begin with the raw amino-acid sequence, 333 residues long: L-lactate dehydrogenase B chain (333 aa).

Residues 29-57 and R99 each bind NAD(+); that span reads GQVGMACAVSILGKGLCDELALVDVLEDK. Residues R106, N138, and R169 each coordinate substrate. An NAD(+)-binding site is contributed by N138. H193 functions as the Proton acceptor in the catalytic mechanism. T248 contributes to the substrate binding site.

This sequence belongs to the LDH/MDH superfamily. LDH family. In terms of assembly, homotetramer.

It is found in the cytoplasm. The enzyme catalyses (S)-lactate + NAD(+) = pyruvate + NADH + H(+). Its pathway is fermentation; pyruvate fermentation to lactate; (S)-lactate from pyruvate: step 1/1. In terms of biological role, interconverts simultaneously and stereospecifically pyruvate and lactate with concomitant interconversion of NADH and NAD(+). The polypeptide is L-lactate dehydrogenase B chain (LDHB) (Anas platyrhynchos (Mallard)).